Here is a 208-residue protein sequence, read N- to C-terminus: FMN-dependent NADH:quinone oxidoreductase 2 (208 aa).

FMN is bound at residue 17-19 (SVS).

This sequence belongs to the azoreductase type 1 family. Homodimer. FMN is required as a cofactor.

The enzyme catalyses 2 a quinone + NADH + H(+) = 2 a 1,4-benzosemiquinone + NAD(+). It carries out the reaction N,N-dimethyl-1,4-phenylenediamine + anthranilate + 2 NAD(+) = 2-(4-dimethylaminophenyl)diazenylbenzoate + 2 NADH + 2 H(+). Quinone reductase that provides resistance to thiol-specific stress caused by electrophilic quinones. In terms of biological role, also exhibits azoreductase activity. Catalyzes the reductive cleavage of the azo bond in aromatic azo compounds to the corresponding amines. In Halalkalibacterium halodurans (strain ATCC BAA-125 / DSM 18197 / FERM 7344 / JCM 9153 / C-125) (Bacillus halodurans), this protein is FMN-dependent NADH:quinone oxidoreductase 2.